Consider the following 126-residue polypeptide: Large ribosomal subunit protein bL12 (126 aa).

This sequence belongs to the bacterial ribosomal protein bL12 family. Homodimer. Part of the ribosomal stalk of the 50S ribosomal subunit. Forms a multimeric L10(L12)X complex, where L10 forms an elongated spine to which 2 to 4 L12 dimers bind in a sequential fashion. Binds GTP-bound translation factors.

Its function is as follows. Forms part of the ribosomal stalk which helps the ribosome interact with GTP-bound translation factors. Is thus essential for accurate translation. This chain is Large ribosomal subunit protein bL12, found in Chlorobaculum parvum (strain DSM 263 / NCIMB 8327) (Chlorobium vibrioforme subsp. thiosulfatophilum).